Consider the following 83-residue polypeptide: Small ribosomal subunit protein bS16 (83 aa).

The protein belongs to the bacterial ribosomal protein bS16 family.

This is Small ribosomal subunit protein bS16 from Shewanella halifaxensis (strain HAW-EB4).